Consider the following 100-residue polypeptide: NADH-quinone oxidoreductase subunit K (100 aa).

The next 3 membrane-spanning stretches (helical) occupy residues 4 to 24 (LTHG…GLVI), 28 to 48 (LLFM…AFVV), and 60 to 80 (VMYI…LALL).

Belongs to the complex I subunit 4L family. In terms of assembly, NDH-1 is composed of 13 different subunits. Subunits NuoA, H, J, K, L, M, N constitute the membrane sector of the complex.

The protein localises to the cell inner membrane. It catalyses the reaction a quinone + NADH + 5 H(+)(in) = a quinol + NAD(+) + 4 H(+)(out). In terms of biological role, NDH-1 shuttles electrons from NADH, via FMN and iron-sulfur (Fe-S) centers, to quinones in the respiratory chain. The immediate electron acceptor for the enzyme in this species is believed to be ubiquinone. Couples the redox reaction to proton translocation (for every two electrons transferred, four hydrogen ions are translocated across the cytoplasmic membrane), and thus conserves the redox energy in a proton gradient. This Enterobacter sp. (strain 638) protein is NADH-quinone oxidoreductase subunit K.